The chain runs to 991 residues: MRPAALLLLPSLLALLAHGLSSEAPITGEGHATGIRETDGELTAAPTPEQSDRGVHFVTTAPTLKLLNHHPLLEEFLQEGLEREEAPQPALPFQPDSPTHFTPSPLPRLTNQDNRPVFTSPTPAVAAAPTQPHSREKPWNLESKPPELSITSSLPPGPSMAVPTLLPEDRPSTTPPSQAWTPTQEGPGDMDRPWVPEVMSKTTGLGVEGTIATSTASGDDEETTTTIITTTVTTVQPPGPCSWNFSGPEGSLDSPTAPSSPSDVGLDCFYYISVYPGYGVEIKVENISLQEGETITVEGLGGPDPLPLANQSFLLRGQVIRSPTHQAALRFQSLPLPAGPGTFHFRYQAYLLSCHFPRRPAYGDVTVTSLHPGGSAHFHCATGYQLKGARFLTCLNATQPFWDSQEPVCIAACGGVIRNATTGRIVSPGFPGNYSNNLTCHWLLEAPESQRLHLHFEKVSLAEDDDRLIIRNGNNVEAPPVYDSYEVEYLPIEGLLSSGRHFFVEFSTDSSGAAAGMALRYEAFQQGHCYEPFVKYGNFSSSAPSYPVGTTVEFSCDPGYTLEQGSIIIECVDLHDPQWNETEPACRAVCSGEITDSAGVVLSPNWPEPYGRGQDCIWGVHVEEDKRIMLDIRVLRIGSGDVLTFYDGDDLTARVLGQYSGPRGHFKLFTSMADVTIQFQSDPGTSALGYQQGFVIHFFEVPRNDTCPELPEIPNGWKNPSQPELVHGTVVTYQCYPGYQVVGSSILMCQWDLSWSEDLPSCQRVTSCHDPGDVEHSRRLISSPKFPVGATVQYVCDQGFVLTGSAILTCHDRQAGSPKWSDRAPKCLLEQFKPCHGLSAPENGARSPEKRLHPAGATIHFSCAPGYVLKGQASIKCVPGHPSHWSDPPPICRAASLDGFYNGRSLDVAKAPAASSALDAAHLAAAIFLPLVAMVLLVGGVYLYFSRFQGKSPLQLPRTHPRPYNRITVESAFDNPTYETGSLSFAGDERI.

A signal peptide spans 1–19 (MRPAALLLLPSLLALLAHG). The Extracellular portion of the chain corresponds to 20–922 (LSSEAPITGE…AASSALDAAH (903 aa)). Residues 79 to 193 (EGLEREEAPQ…QEGPGDMDRP (115 aa)) are disordered. The segment covering 119–132 (TSPTPAVAAAPTQP) has biased composition (low complexity). The segment covering 175 to 184 (PPSQAWTPTQ) has biased composition (polar residues). A disulfide bridge connects residues Cys-241 and Cys-268. Residues 241–353 (CSWNFSGPEG…HFRYQAYLLS (113 aa)) form the CUB 1 domain. Residue Asn-286 is glycosylated (N-linked (GlcNAc...) asparagine). The 60-residue stretch at 352-411 (LSCHFPRRPAYGDVTVTSLHPGGSAHFHCATGYQLKGARFLTCLNATQPFWDSQEPVCIA) folds into the Sushi 1 domain. Cystine bridges form between Cys-354–Cys-394, Cys-380–Cys-409, Cys-413–Cys-440, Cys-529–Cys-571, Cys-556–Cys-586, Cys-590–Cys-616, Cys-707–Cys-749, Cys-735–Cys-762, Cys-768–Cys-810, Cys-796–Cys-827, Cys-835–Cys-877, and Cys-863–Cys-892. N-linked (GlcNAc...) asparagine glycans are attached at residues Asn-396, Asn-433, and Asn-538. The region spanning 413 to 524 (CGGVIRNATT…AGMALRYEAF (112 aa)) is the CUB 2 domain. Positions 527 to 588 (GHCYEPFVKY…WNETEPACRA (62 aa)) constitute a Sushi 2 domain. Residues 590-701 (CSGEITDSAG…QGFVIHFFEV (112 aa)) enclose the CUB 3 domain. Sushi domains lie at 705 to 764 (DTCP…SCQR), 766 to 829 (TSCH…KCLL), and 833 to 894 (KPCH…ICRA). A helical membrane pass occupies residues 923-943 (LAAAIFLPLVAMVLLVGGVYL). Topologically, residues 944 to 991 (YFSRFQGKSPLQLPRTHPRPYNRITVESAFDNPTYETGSLSFAGDERI) are cytoplasmic.

The protein belongs to the SEZ6 family. Post-translationally, glycosylated. Brain-specific. Expressed in extrasynaptic and synaptic subcellular fractions (at protein level). Expression correlates with the most active periods of cortical neurogenesis and neuronal maturation. Expression is restricted to the gray matter with higher levels in the forebrain including the olfactory bulb, anterior olfactory nuclei, olfactory tubercle, striatum, hippocampal CA1 pyramidal cell layer and cerebral cortex. Expression is up-regulated with the convulsant drug, pentylenetetrazole.

The protein localises to the cell membrane. It is found in the cell projection. Its subcellular location is the dendrite. It localises to the synapse. The protein resides in the secreted. The protein localises to the cytoplasm. Functionally, may play a role in cell-cell recognition and in neuronal membrane signaling. Seems to be important for the achievement of the necessary balance between dendrite elongation and branching during the elaboration of a complex dendritic arbor. Involved in the development of appropriate excitatory synaptic connectivity. The polypeptide is Seizure protein 6 (Sez6) (Mus musculus (Mouse)).